The following is a 506-amino-acid chain: Maturase K (506 aa).

It belongs to the intron maturase 2 family. MatK subfamily.

It localises to the plastid. The protein localises to the chloroplast. Functionally, usually encoded in the trnK tRNA gene intron. Probably assists in splicing its own and other chloroplast group II introns. The protein is Maturase K of Phyllodoce caerulea (Blue mountain heath).